The following is a 94-amino-acid chain: MSNKVKTKAMVPPINCIFNFLQQQTPVTIWLFEQIGIRIKGKIVGFDEFMNVVIDEAVEIPVNSADGKEDVEKGTPLGKILLKGDNITLITSAD.

Residues Ile-14 to Asp-94 enclose the Sm domain.

Belongs to the snRNP Sm proteins family. As to quaternary structure, component of the Sm core complex, present in spliceosomal snRNP U1, U2, U4/U6 and U5. The core complex contains SMB1, SMD1, SMD2, SMD3, SME1, SMX3 and SMX2 (Sm proteins B, D1, D2, D3, E, F and G, respectively), and is probably a heptameric ring structure. SME1 specifically interacts with SMX2 and SMX3. Component of the U4/U6-U5 tri-snRNP complex composed of the U4, U6 and U5 snRNAs and at least PRP3, PRP4, PRP6, PRP8, PRP18, PRP31, PRP38, SNU13, SNU23, SNU66, SNU114, SPP381, SMB1, SMD1, SMD2, SMD3, SMX2, SMX3, LSM2, LSM3, LSM4, LSM5, LSM6, LSM7, LSM8, BRR2 and DIB1.

It is found in the cytoplasm. The protein localises to the nucleus. In terms of biological role, involved in pre-mRNA splicing. Binds and is required for the stability of snRNA U1, U2, U4 and U5 which contain a highly conserved structural motif called the Sm binding site. Involved in cap modification. In Saccharomyces cerevisiae (strain ATCC 204508 / S288c) (Baker's yeast), this protein is Small nuclear ribonucleoprotein E (SME1).